We begin with the raw amino-acid sequence, 293 residues long: Elongation factor Ts (293 aa).

An involved in Mg(2+) ion dislocation from EF-Tu region spans residues 80 to 83 (TDFV).

The protein belongs to the EF-Ts family.

The protein localises to the cytoplasm. In terms of biological role, associates with the EF-Tu.GDP complex and induces the exchange of GDP to GTP. It remains bound to the aminoacyl-tRNA.EF-Tu.GTP complex up to the GTP hydrolysis stage on the ribosome. The sequence is that of Elongation factor Ts from Enterococcus faecalis (strain ATCC 700802 / V583).